A 245-amino-acid chain; its full sequence is DNA polymerase sliding clamp (245 aa).

It belongs to the PCNA family. In terms of assembly, homotrimer. The subunits circularize to form a toroid; DNA passes through its center. Replication factor C (RFC) is required to load the toroid on the DNA.

Functionally, sliding clamp subunit that acts as a moving platform for DNA processing. Responsible for tethering the catalytic subunit of DNA polymerase and other proteins to DNA during high-speed replication. The polypeptide is DNA polymerase sliding clamp (Picrophilus torridus (strain ATCC 700027 / DSM 9790 / JCM 10055 / NBRC 100828 / KAW 2/3)).